The following is a 625-amino-acid chain: Pyriculol/pyriculariol biosynthesis cluster transcription factor 1 (625 aa).

2 disordered regions span residues 1–83 (MATE…ATQD) and 466–496 (PMSA…LPAS). A compositionally biased stretch (low complexity) spans 46-59 (TPSPSTPANPNSAS). Positions 73 to 132 (KNQKRQRATQDQLTTLEQEFAKNPTPTATVRDRIAEEINMTERSVQIWFQNRRAKIKLMA) form a DNA-binding region, homeobox. Polar residues predominate over residues 467–496 (MSATTAPSPSEYNSPSFFSQAPENTPLPAS).

The protein resides in the nucleus. Its function is as follows. Transcriptional regulator; part of the gene cluster that mediates the biosynthesis of pyriculol and pyriculariol, two heptaketides that induce lesion formation upon application on rice leaves but are dispensable for pathogenicity. With TRF1, negatively regulates the expression of the gene cluster and the subsequent pyriculol and pyriculariol production. This chain is Pyriculol/pyriculariol biosynthesis cluster transcription factor 1, found in Pyricularia oryzae (strain 70-15 / ATCC MYA-4617 / FGSC 8958) (Rice blast fungus).